The primary structure comprises 275 residues: MALIKVKPTSAGRRAVVKVVTPGLHKGKPLAALLEPKKRGSGRNNNGHITVRHKGGGHKQHYRVVDFRRNKDGIPAKVERIEYDPNRSAHLALLCYADGERRYIIAPRGIAVGAQLVNGVEAPIKAGNCLPLRSIPVGSTVHCVEMMPGKGAQIARSAGTSVQLLAREGSYAQLRLRSGEIRKVHVDCRATLGECGNEEHSLRSIGKAGASRWRGIRPTVRGVVMNPVDHPHGGGEGRTAAGRHPVSPWGTPTKGYRTRSNKRTSNMIVRRRHAR.

Disordered stretches follow at residues 36–55 (PKKR…RHKG) and 223–275 (VVMN…RHAR).

Belongs to the universal ribosomal protein uL2 family. Part of the 50S ribosomal subunit. Forms a bridge to the 30S subunit in the 70S ribosome.

Functionally, one of the primary rRNA binding proteins. Required for association of the 30S and 50S subunits to form the 70S ribosome, for tRNA binding and peptide bond formation. It has been suggested to have peptidyltransferase activity; this is somewhat controversial. Makes several contacts with the 16S rRNA in the 70S ribosome. This Thiobacillus denitrificans (strain ATCC 25259 / T1) protein is Large ribosomal subunit protein uL2.